A 335-amino-acid chain; its full sequence is Large ribosomal subunit protein uL3 (335 aa).

Belongs to the universal ribosomal protein uL3 family. Part of the 50S ribosomal subunit. Forms a cluster with proteins L14 and L24e.

One of the primary rRNA binding proteins, it binds directly near the 3'-end of the 23S rRNA, where it nucleates assembly of the 50S subunit. In Methanocaldococcus jannaschii (strain ATCC 43067 / DSM 2661 / JAL-1 / JCM 10045 / NBRC 100440) (Methanococcus jannaschii), this protein is Large ribosomal subunit protein uL3.